Consider the following 634-residue polypeptide: Probable potassium transport system protein Kup (634 aa).

A run of 12 helical transmembrane segments spans residues 21 to 41 (IILS…LYTL), 61 to 81 (ILSL…VAVI), 110 to 130 (IYIV…DGVI), 148 to 168 (PHMK…LFLC), 180 to 200 (FGPI…YNIA), 217 to 237 (FFLE…LAVT), 258 to 278 (WMYV…ALVL), 296 to 316 (GLYP…QALI), 348 to 368 (IYVP…VIGF), 377 to 397 (AYGV…IIYA), 408 to 428 (LWMM…ANII), and 432 to 452 (DGAW…RTWL).

This sequence belongs to the HAK/KUP transporter (TC 2.A.72) family.

Its subcellular location is the cell inner membrane. The catalysed reaction is K(+)(in) + H(+)(in) = K(+)(out) + H(+)(out). Functionally, transport of potassium into the cell. Likely operates as a K(+):H(+) symporter. The polypeptide is Probable potassium transport system protein Kup (Xylella fastidiosa (strain 9a5c)).